The primary structure comprises 178 residues: DNA-directed RNA polymerase V subunit 7 (178 aa).

The protein belongs to the eukaryotic RPB7/RPC8 RNA polymerase subunit family. In terms of assembly, component of the RNA polymerase V complex.

The protein localises to the nucleus. Its function is as follows. DNA-dependent RNA polymerase catalyzes the transcription of DNA into RNA using the four ribonucleoside triphosphates as substrates. Component of RNA polymerase V involved in RNA-directed DNA methylation-dependent (RdDM) silencing of endogenous repeated sequences, including transposable elements. This Arabidopsis thaliana (Mouse-ear cress) protein is DNA-directed RNA polymerase V subunit 7 (NRPE7).